A 103-amino-acid polypeptide reads, in one-letter code: Small ribosomal subunit protein bS6c (103 aa).

The protein belongs to the bacterial ribosomal protein bS6 family.

Its subcellular location is the plastid. The protein localises to the chloroplast. Binds together with bS18 to 16S ribosomal RNA. The protein is Small ribosomal subunit protein bS6c of Thalassiosira pseudonana (Marine diatom).